Reading from the N-terminus, the 401-residue chain is uncharacterized protein (401 aa).

This sequence belongs to the serpin family.

Its function is as follows. May act as an inhibitor for a host chymotrypsin-like protease. This is an uncharacterized protein from Acanthamoeba polyphaga mimivirus (APMV).